The primary structure comprises 133 residues: Small ribosomal subunit protein uS11 (133 aa).

It belongs to the universal ribosomal protein uS11 family. As to quaternary structure, part of the 30S ribosomal subunit.

In terms of biological role, located on the platform of the 30S subunit. The chain is Small ribosomal subunit protein uS11 from Aeropyrum pernix (strain ATCC 700893 / DSM 11879 / JCM 9820 / NBRC 100138 / K1).